A 287-amino-acid chain; its full sequence is Small ribosomal subunit protein uS2 (287 aa).

Positions 233–287 (HKAPQDDIEPMAEWEKQLLQSGDSSGETRPISGTDRPLDGDLSKGPAPQDEELSD) are disordered. Residues 250 to 259 (LLQSGDSSGE) are compositionally biased toward polar residues.

This sequence belongs to the universal ribosomal protein uS2 family.

This is Small ribosomal subunit protein uS2 from Tropheryma whipplei (strain TW08/27) (Whipple's bacillus).